A 201-amino-acid chain; its full sequence is ATP synthase subunit delta, chloroplastic (201 aa).

The protein belongs to the ATPase delta chain family. F-type ATPases have 2 components, F(1) - the catalytic core - and F(0) - the membrane proton channel. F(1) has five subunits: alpha(3), beta(3), gamma(1), delta(1), epsilon(1). CF(0) has four main subunits: a(1), b(1), b'(1) and c(10-14). The alpha and beta chains form an alternating ring which encloses part of the gamma chain. F(1) is attached to F(0) by a central stalk formed by the gamma and epsilon chains, while a peripheral stalk is formed by the delta, b and b' chains.

The protein resides in the plastid. The protein localises to the chloroplast thylakoid membrane. Its function is as follows. F(1)F(0) ATP synthase produces ATP from ADP in the presence of a proton or sodium gradient. F-type ATPases consist of two structural domains, F(1) containing the extramembraneous catalytic core and F(0) containing the membrane proton channel, linked together by a central stalk and a peripheral stalk. During catalysis, ATP synthesis in the catalytic domain of F(1) is coupled via a rotary mechanism of the central stalk subunits to proton translocation. This protein is part of the stalk that links CF(0) to CF(1). It either transmits conformational changes from CF(0) to CF(1) or is implicated in proton conduction. In Vaucheria litorea (Yellow-green alga), this protein is ATP synthase subunit delta, chloroplastic.